A 301-amino-acid polypeptide reads, in one-letter code: 4-hydroxy-tetrahydrodipicolinate synthase (301 aa).

Pyruvate is bound at residue Thr57. Tyr143 serves as the catalytic Proton donor/acceptor. The Schiff-base intermediate with substrate role is filled by Lys171. Position 211 (Ile211) interacts with pyruvate.

The protein belongs to the DapA family. As to quaternary structure, homotetramer; dimer of dimers.

It is found in the cytoplasm. The catalysed reaction is L-aspartate 4-semialdehyde + pyruvate = (2S,4S)-4-hydroxy-2,3,4,5-tetrahydrodipicolinate + H2O + H(+). It functions in the pathway amino-acid biosynthesis; L-lysine biosynthesis via DAP pathway; (S)-tetrahydrodipicolinate from L-aspartate: step 3/4. Functionally, catalyzes the condensation of (S)-aspartate-beta-semialdehyde [(S)-ASA] and pyruvate to 4-hydroxy-tetrahydrodipicolinate (HTPA). This is 4-hydroxy-tetrahydrodipicolinate synthase from Bifidobacterium longum (strain DJO10A).